We begin with the raw amino-acid sequence, 204 residues long: Casparian strip membrane protein 2 (204 aa).

Topologically, residues 1 to 41 are cytoplasmic; the sequence is MKNESTFIDVPADSSSAMKGKAPLIGVAKDHTASGSGGYNR. Residues 42-62 form a helical membrane-spanning segment; it reads GLSIFDFLLRLAAIVAASVAA. Over 63–92 the chain is Extracellular; sequence GTMFTSDETLPFFTQFLQFEAGYDDLPTFQ. The chain crosses the membrane as a helical span at residues 93 to 113; it reads FFVIAMSLVSGYIVLSLPISV. The Cytoplasmic segment spans residues 114 to 125; sequence VTIVRPLAAAPR. A helical transmembrane segment spans residues 126-146; it reads LLLLVLDTAVMGLTMAAASSA. Topologically, residues 147-178 are extracellular; it reads AAISYVAHNGNQNTNWLPICQQFFDFCQKTSG. Residues 179–199 form a helical membrane-spanning segment; sequence AVVSSFVAVVFFMILVVLSGV. The Cytoplasmic segment spans residues 200–204; it reads ALERH.

Belongs to the Casparian strip membrane proteins (CASP) family. In terms of assembly, homodimer and heterodimers.

Its subcellular location is the cell membrane. Its function is as follows. Regulates membrane-cell wall junctions and localized cell wall deposition. Required for establishment of the Casparian strip membrane domain (CSD) and the subsequent formation of Casparian strips, a cell wall modification of the root endodermis that determines an apoplastic barrier between the intraorganismal apoplasm and the extraorganismal apoplasm and prevents lateral diffusion. The chain is Casparian strip membrane protein 2 from Raphanus sativus (Radish).